An 82-amino-acid chain; its full sequence is Small ribosomal subunit protein bS16 (82 aa).

It belongs to the bacterial ribosomal protein bS16 family.

This chain is Small ribosomal subunit protein bS16, found in Yersinia pseudotuberculosis serotype O:1b (strain IP 31758).